The chain runs to 426 residues: D-tagatose-1,6-bisphosphate aldolase subunit KbaZ (426 aa).

Belongs to the GatZ/KbaZ family. KbaZ subfamily. As to quaternary structure, forms a complex with KbaY.

Its pathway is carbohydrate metabolism; D-tagatose 6-phosphate degradation; D-glyceraldehyde 3-phosphate and glycerone phosphate from D-tagatose 6-phosphate: step 2/2. In terms of biological role, component of the tagatose-1,6-bisphosphate aldolase KbaYZ that is required for full activity and stability of the Y subunit. Could have a chaperone-like function for the proper and stable folding of KbaY. When expressed alone, KbaZ does not show any aldolase activity. The chain is D-tagatose-1,6-bisphosphate aldolase subunit KbaZ from Escherichia fergusonii (strain ATCC 35469 / DSM 13698 / CCUG 18766 / IAM 14443 / JCM 21226 / LMG 7866 / NBRC 102419 / NCTC 12128 / CDC 0568-73).